A 625-amino-acid polypeptide reads, in one-letter code: Interleukin-1 receptor-associated kinase-like 2 (625 aa).

The region spanning 13-94 (LDDPCRNMDA…RAAQIILNWK (82 aa)) is the Death domain. The interval 111–181 (KPEKPLAASV…SSDSKDFSTS (71 aa)) is disordered. Ser-144 bears the Phosphoserine mark. Positions 169-181 (LPTSSDSKDFSTS) are enriched in polar residues. Residues 210-503 (FNQNHKISQG…GSVAAVEEWL (294 aa)) enclose the Protein kinase domain. ATP contacts are provided by residues 216-224 (ISQGTFADV), Lys-237, and 337-340 (KSSN). The disordered stretch occupies residues 513–539 (SGLSEGTGSSSNTPEETDDVDNSSLDA). Over residues 516 to 526 (SEGTGSSSNTP) the composition is skewed to polar residues.

It belongs to the protein kinase superfamily. TKL Ser/Thr protein kinase family. Pelle subfamily. Interacts with MYD88. IL-1 stimulation leads to the formation of a signaling complex which dissociates from the IL-1 receptor following the binding of PELI1.

In terms of biological role, binds to the IL-1 type I receptor following IL-1 engagement, triggering intracellular signaling cascades leading to transcriptional up-regulation and mRNA stabilization. This is Interleukin-1 receptor-associated kinase-like 2 (IRAK2) from Pongo abelii (Sumatran orangutan).